We begin with the raw amino-acid sequence, 260 residues long: 3'-5' ssDNA/RNA exonuclease TatD (260 aa).

A divalent metal cation-binding residues include Glu92, His128, and His153.

It belongs to the metallo-dependent hydrolases superfamily. TatD-type hydrolase family. TatD subfamily. As to quaternary structure, monomer. Mg(2+) serves as cofactor.

It localises to the cytoplasm. Functionally, 3'-5' exonuclease that prefers single-stranded DNA and RNA. May play a role in the H(2)O(2)-induced DNA damage repair. This Yersinia pseudotuberculosis serotype O:3 (strain YPIII) protein is 3'-5' ssDNA/RNA exonuclease TatD.